Consider the following 170-residue polypeptide: RNA pyrophosphohydrolase (170 aa).

One can recognise a Nudix hydrolase domain in the interval 6–150 (GFRPNVGIIL…KRDVYRRALR (145 aa)). A Nudix box motif is present at residues 39–60 (GGINAHESPEQALYRELHEEVG).

Belongs to the Nudix hydrolase family. RppH subfamily. A divalent metal cation is required as a cofactor.

Accelerates the degradation of transcripts by removing pyrophosphate from the 5'-end of triphosphorylated RNA, leading to a more labile monophosphorylated state that can stimulate subsequent ribonuclease cleavage. This chain is RNA pyrophosphohydrolase, found in Cellvibrio japonicus (strain Ueda107) (Pseudomonas fluorescens subsp. cellulosa).